The primary structure comprises 248 residues: 5'-nucleotidase SurE (248 aa).

4 residues coordinate a divalent metal cation: aspartate 8, aspartate 9, serine 39, and asparagine 91.

Belongs to the SurE nucleotidase family. It depends on a divalent metal cation as a cofactor.

It localises to the cytoplasm. It catalyses the reaction a ribonucleoside 5'-phosphate + H2O = a ribonucleoside + phosphate. Its function is as follows. Nucleotidase that shows phosphatase activity on nucleoside 5'-monophosphates. This is 5'-nucleotidase SurE from Shewanella amazonensis (strain ATCC BAA-1098 / SB2B).